Here is a 319-residue protein sequence, read N- to C-terminus: High mobility group B protein 10 (319 aa).

A compositionally biased stretch (polar residues) spans 1-13 (MSTDISPPYSQTH). The disordered stretch occupies residues 1–25 (MSTDISPPYSQTHVEPVNGYPSDNK). The ARID domain maps to 40–131 (VRNSALFWEK…FLFQLEHVYY (92 aa)). Positions 203 to 220 (PSQSQQTMETPSAIVQSS) are enriched in polar residues. Residues 203–230 (PSQSQQTMETPSAIVQSSQRRHRKKSKL) are disordered. Residues 238–305 (PKCHRSGYNF…RYRIEMLEYK (68 aa)) constitute a DNA-binding region (HMG box).

Ubiquitously expressed.

It localises to the nucleus. Binds preferentially DNA with A/T-rich content. In Arabidopsis thaliana (Mouse-ear cress), this protein is High mobility group B protein 10 (HMGB10).